Consider the following 70-residue polypeptide: Toxin Isom2 (70 aa).

Residues 2–65 enclose the LCN-type CS-alpha/beta domain; sequence KNGYAVDSSG…ISDTRKKYCD (64 aa). 4 disulfides stabilise this stretch: Cys16–Cys37, Cys22–Cys42, Cys26–Cys44, and Cys38–Cys64.

Expressed by the venom gland.

It localises to the secreted. In terms of biological role, excitatory insect beta-toxins induce a spastic paralysis. They bind voltage-independently at site-4 of sodium channels (Nav) and shift the voltage of activation toward more negative potentials thereby affecting sodium channel activation and promoting spontaneous and repetitive firing. The chain is Toxin Isom2 from Isometrus vittatus (Bark scorpion).